The primary structure comprises 180 residues: Cell division protein SepF (180 aa).

The tract at residues 14–81 is disordered; the sequence is NSEDDEEFDN…SKITPISKSS (68 aa). Acidic residues predominate over residues 15 to 35; that stretch reads SEDDEEFDNEDYYLDDEEEEE. Over residues 57-68 the composition is skewed to basic and acidic residues; the sequence is TRRDTTPKEKPV. A compositionally biased stretch (low complexity) spans 69–79; sequence KTTSKITPISK.

It belongs to the SepF family. As to quaternary structure, homodimer. Interacts with FtsZ.

It localises to the cytoplasm. Functionally, cell division protein that is part of the divisome complex and is recruited early to the Z-ring. Probably stimulates Z-ring formation, perhaps through the cross-linking of FtsZ protofilaments. Its function overlaps with FtsA. The sequence is that of Cell division protein SepF from Agathobacter rectalis (strain ATCC 33656 / DSM 3377 / JCM 17463 / KCTC 5835 / VPI 0990) (Eubacterium rectale).